Reading from the N-terminus, the 141-residue chain is Large ribosomal subunit protein uL16 (141 aa).

Belongs to the universal ribosomal protein uL16 family. As to quaternary structure, part of the 50S ribosomal subunit.

Its function is as follows. Binds 23S rRNA and is also seen to make contacts with the A and possibly P site tRNAs. The sequence is that of Large ribosomal subunit protein uL16 from Petrotoga mobilis (strain DSM 10674 / SJ95).